The chain runs to 912 residues: Protein transport protein SEC24-2 (912 aa).

Over residues methionine 1–valine 11 the composition is skewed to basic residues. Disordered regions lie at residues methionine 1–serine 83 and proline 102–proline 129. Polar residues-rich tracts occupy residues serine 33–alanine 45, glycine 53–alanine 74, and tyrosine 106–proline 129. Residues cysteine 226, cysteine 229, cysteine 248, and cysteine 251 each contribute to the Zn(2+) site. The zinc finger-like stretch occupies residues cysteine 226–cysteine 251.

The protein belongs to the SEC23/SEC24 family. SEC24 subfamily. The COPII coat is composed of at least 5 proteins: the SEC23/24 complex, the SEC13/31 complex, and the protein SAR1. Golgi apparatus membrane; Peripheral membrane protein; Cytoplasmic side.

It localises to the cytoplasm. The protein localises to the cytoplasmic vesicle. It is found in the COPII-coated vesicle membrane. The protein resides in the endoplasmic reticulum membrane. Its subcellular location is the golgi apparatus membrane. Its function is as follows. Component of the coat protein complex II (COPII) which promotes the formation of transport vesicles from the endoplasmic reticulum (ER). The coat has two main functions, the physical deformation of the endoplasmic reticulum membrane into vesicles and the selection of cargo molecules. The protein is Protein transport protein SEC24-2 (SEC242) of Naumovozyma castellii (Yeast).